A 127-amino-acid chain; its full sequence is Small ribosomal subunit protein uS11 (127 aa).

Belongs to the universal ribosomal protein uS11 family. Part of the 30S ribosomal subunit. Interacts with proteins S7 and S18. Binds to IF-3.

In terms of biological role, located on the platform of the 30S subunit, it bridges several disparate RNA helices of the 16S rRNA. Forms part of the Shine-Dalgarno cleft in the 70S ribosome. The protein is Small ribosomal subunit protein uS11 of Streptococcus pyogenes serotype M49 (strain NZ131).